A 499-amino-acid polypeptide reads, in one-letter code: Lysine--tRNA ligase (499 aa).

Residues Glu-408 and Glu-415 each contribute to the Mg(2+) site.

This sequence belongs to the class-II aminoacyl-tRNA synthetase family. Homodimer. It depends on Mg(2+) as a cofactor.

The protein localises to the cytoplasm. It catalyses the reaction tRNA(Lys) + L-lysine + ATP = L-lysyl-tRNA(Lys) + AMP + diphosphate. The sequence is that of Lysine--tRNA ligase from Bacillus mycoides (strain KBAB4) (Bacillus weihenstephanensis).